Here is a 182-residue protein sequence, read N- to C-terminus: CASP-like protein 2B1 (182 aa).

Residues 1–12 (MKLIDRRMRLTE) lie on the Cytoplasmic side of the membrane. A helical transmembrane segment spans residues 13 to 31 (LLLRCSISVFALLALILVV). Over 32 to 52 (TDTEVKLIFTIKKTAKYTDMK) the chain is Extracellular. The chain crosses the membrane as a helical span at residues 53 to 73 (AVVFLVVANGIAAVYSLLQSV). The Cytoplasmic portion of the chain corresponds to 74 to 89 (RCVVGTMKGRVLFSKP). The chain crosses the membrane as a helical span at residues 90-110 (LAWAFFSGDQAMAYLNVAAIA). At 111 to 141 (ATAESGVIAREGEEDLQWMRVCNMYGKFCNQ) the chain is on the extracellular side. A helical transmembrane segment spans residues 142–162 (MAIGVSSALLASIAMVFVSCI). The Cytoplasmic portion of the chain corresponds to 163–182 (SAFSLFRLYGATRDRRTTPW).

It belongs to the Casparian strip membrane proteins (CASP) family. Homodimer and heterodimers.

It is found in the cell membrane. The protein is CASP-like protein 2B1 of Arabidopsis lyrata subsp. lyrata (Lyre-leaved rock-cress).